We begin with the raw amino-acid sequence, 227 residues long: Ribonuclease 3 (227 aa).

The RNase III domain occupies 5–127; the sequence is LNALQLRLQH…LIGAVYLDAG (123 aa). Glu40 is a binding site for Mg(2+). The active site involves Asp44. Mg(2+) is bound by residues Asp113 and Glu116. The active site involves Glu116. Residues 154–224 enclose the DRBM domain; sequence DAKTALQEWL…ATAMLELLKA (71 aa).

This sequence belongs to the ribonuclease III family. Homodimer. The cofactor is Mg(2+).

It localises to the cytoplasm. The enzyme catalyses Endonucleolytic cleavage to 5'-phosphomonoester.. In terms of biological role, digests double-stranded RNA. Involved in the processing of primary rRNA transcript to yield the immediate precursors to the large and small rRNAs (23S and 16S). Processes some mRNAs, and tRNAs when they are encoded in the rRNA operon. Processes pre-crRNA and tracrRNA of type II CRISPR loci if present in the organism. This chain is Ribonuclease 3, found in Delftia acidovorans (strain DSM 14801 / SPH-1).